Reading from the N-terminus, the 205-residue chain is Outer-membrane lipoprotein LolB (205 aa).

Residues 1 to 17 (MFLRHCITFTLIALLAG) form the signal peptide. Residue cysteine 18 is the site of N-palmitoyl cysteine attachment. Residue cysteine 18 is the site of S-diacylglycerol cysteine attachment.

The protein belongs to the LolB family. In terms of assembly, monomer.

The protein localises to the cell outer membrane. Plays a critical role in the incorporation of lipoproteins in the outer membrane after they are released by the LolA protein. This Pseudomonas putida (strain GB-1) protein is Outer-membrane lipoprotein LolB.